Consider the following 358-residue polypeptide: Peptide chain release factor 1 (358 aa).

Gln233 bears the N5-methylglutamine mark.

The protein belongs to the prokaryotic/mitochondrial release factor family. Methylated by PrmC. Methylation increases the termination efficiency of RF1.

The protein localises to the cytoplasm. Functionally, peptide chain release factor 1 directs the termination of translation in response to the peptide chain termination codons UAG and UAA. This chain is Peptide chain release factor 1, found in Clostridium botulinum (strain 657 / Type Ba4).